The chain runs to 331 residues: Type 2 lactosamine alpha-2,3-sialyltransferase (331 aa).

Over 1 to 4 (MRGY) the chain is Cytoplasmic. The helical; Signal-anchor for type II membrane protein transmembrane segment at 5–25 (LVAIFLSAVFLYYVLHCILWG) threads the bilayer. The Lumenal segment spans residues 26–331 (TNVYWVAPVE…KNLVINLTQD (306 aa)). N-linked (GlcNAc...) asparagine glycans are attached at residues N129, N181, N282, N295, N308, and N327.

The protein belongs to the glycosyltransferase 29 family. Ubiquitous.

The protein resides in the golgi apparatus membrane. The catalysed reaction is a neolactoside nLc4Cer(d18:1(4E)) + CMP-N-acetyl-beta-neuraminate = a neolactoside IV(3)-alpha-NeuAc-nLc4Cer(d18:1(4E)) + CMP + H(+). The enzyme catalyses a beta-D-galactosyl-(1-&gt;4)-N-acetyl-beta-D-glucosaminyl derivative + CMP-N-acetyl-beta-neuraminate = an N-acetyl-alpha-neuraminyl-(2-&gt;3)-beta-D-galactosyl-(1-&gt;4)-N-acetyl-beta-D-glucosaminyl derivative + CMP + H(+). It catalyses the reaction a neolactoside nLc6Cer(d18:1(4E)) + CMP-N-acetyl-beta-neuraminate = a neolactoside VI(3)-alpha-NeuNAc-nLc6Cer(d18:1(4E)) + CMP + H(+). Functionally, transfers the sialyl residue from CMP-N-acetyl-beta-neuraminate to the terminal galactose residue on sugar chains of glycoproteins and glycolipids. It's alpha-2,3-sialyltransferase activity is specific toward type II glycan chains (Galbeta1-4GlcNAc) on glycoproteins and glycolipids such as neolactosides nLc4Cer and nLc6Cer, whose sialyl-products serve as precursors for the Lewis X antigen. Critically involved in the synthesis of functional selectin ligands needed for neutrophil recruitment during inflammation and lymphocyte homing to the lymph nodes. This is Type 2 lactosamine alpha-2,3-sialyltransferase (ST3GAL6) from Homo sapiens (Human).